Consider the following 387-residue polypeptide: Protein disulfide isomerase pTAC5, chloroplastic (387 aa).

The N-terminal 40 residues, 1–40 (MASSSLPLSLPFPLRSLTSTTRSLPFQCSPLFFSIPSSIV), are a transit peptide targeting the chloroplast. Coiled-coil stretches lie at residues 72–106 (EQRWIRERESLLQEISDLQLRIQSLESRNSQLGNS) and 143–163 (REQIVEEVEEEEKRVIIAEEK). The segment at 318–387 (PVDRSESTNT…CDVCDGKKNL (70 aa)) adopts a CR-type zinc-finger fold.

As to quaternary structure, interacts with HSP21; the formed complex associates with the plastid-encoded RNA polymerase (PEP) complex not only during transcription initiation, but also during elongation and termination, and with a stronger efficiency in illuminated chloroplasts. Binds to promoter regions of PEP-dependent genes, especially after a heat stress. Interacts with FLN2.

The protein resides in the plastid. It localises to the chloroplast stroma. Its subcellular location is the chloroplast nucleoid. It carries out the reaction Catalyzes the rearrangement of -S-S- bonds in proteins.. Its function is as follows. Exhibits zinc-dependent disulfide isomerase activity. Required for seedling and chloroplast development under heat stress, probably by maintaining plastid-encoded RNA polymerase (PEP)-dependent transcription. The sequence is that of Protein disulfide isomerase pTAC5, chloroplastic from Arabidopsis thaliana (Mouse-ear cress).